A 338-amino-acid polypeptide reads, in one-letter code: Malate dehydrogenase, mitochondrial (338 aa).

The transit peptide at 1-24 (MLSALARPAGAALRRSFSTSAQNN) directs the protein to the mitochondrion. NAD(+) contacts are provided by residues 31–37 (GASGGIG) and Asp57. Ser33 carries O-linked (GlcNAc) serine glycosylation. 2 positions are modified to N6-acetyllysine; alternate: Lys78 and Lys91. An N6-succinyllysine; alternate mark is found at Lys78 and Lys91. Arg104 and Arg110 together coordinate substrate. NAD(+)-binding positions include Asn117 and 140–142 (IAN). Asn142 serves as a coordination point for substrate. Residue Lys165 is modified to N6-acetyllysine. Arg176 serves as a coordination point for substrate. Lys185 carries the N6-acetyllysine; alternate modification. Lys185 is modified (N6-succinyllysine; alternate). The Proton acceptor role is filled by His200. Lys203 carries the N6-succinyllysine modification. N6-acetyllysine; alternate is present on residues Lys215 and Lys239. An N6-succinyllysine; alternate mark is found at Lys215 and Lys239. Residue Lys239 is modified to N6-malonyllysine; alternate. Position 246 is a phosphoserine (Ser246). Residue Met251 participates in NAD(+) binding. Lys269 carries the N6-succinyllysine modification. N6-acetyllysine; alternate is present on residues Lys296, Lys301, and Lys307. N6-succinyllysine; alternate occurs at positions 296, 301, and 307. Lys307 carries the post-translational modification N6-malonyllysine; alternate. Position 309 is a phosphothreonine (Thr309). An N6-acetyllysine; alternate mark is found at Lys314 and Lys324. N6-succinyllysine; alternate occurs at positions 314 and 324. Residue Ser326 is modified to Phosphoserine. Lys328, Lys329, and Lys335 each carry N6-acetyllysine; alternate. An N6-succinyllysine; alternate modification is found at Lys328. Position 329 is an N6-malonyllysine; alternate (Lys329). Position 335 is an N6-succinyllysine; alternate (Lys335).

Belongs to the LDH/MDH superfamily. MDH type 1 family. Homodimer. Acetylation is enhanced after treatment either with trichostin A (TCA) or with nicotinamide (NAM) with the appearance of tri- and tetraacetylations. Glucose also increases acetylation. Acetylation of Lys-239 and Lys-314 is observed in liver mitochondria from fasted mice but not from fed mice.

It is found in the mitochondrion matrix. The enzyme catalyses (S)-malate + NAD(+) = oxaloacetate + NADH + H(+). With respect to regulation, enzyme activity is enhanced by acetylation. In Mus musculus (Mouse), this protein is Malate dehydrogenase, mitochondrial (Mdh2).